A 315-amino-acid chain; its full sequence is Putative methyltransferase SPBC8D2.16c (315 aa).

The protein belongs to the class IV-like SAM-binding methyltransferase superfamily.

Its subcellular location is the cytoplasm. The protein localises to the nucleus. The sequence is that of Putative methyltransferase SPBC8D2.16c from Schizosaccharomyces pombe (strain 972 / ATCC 24843) (Fission yeast).